The chain runs to 465 residues: FAD-dependent monooxygenase pyr5 (465 aa).

Positions 1–16 (MRVLIIGGSIAGLTLA) are cleaved as a signal peptide. FAD is bound by residues glutamate 30, glycine 44, and arginine 103. The active site involves tyrosine 210. The FAD site is built by aspartate 306 and alanine 319. The chain crosses the membrane as a helical span at residues 440-456 (PTFPLTVAGLCLVAIVI).

Belongs to the paxM FAD-dependent monooxygenase family. FAD serves as cofactor.

Its subcellular location is the membrane. The catalysed reaction is 4-hydroxy-3-[(2E,6E)-farnesyl]-6-(pyridin-3-yl)-2H-pyran-2-one + NADPH + O2 + H(+) = 2-oxo-3-[(8S)-epoxy-(2E,6E)-farnesyl]-6-(pyridin-3-yl)-2H-pyran-4-olate + NADP(+) + H2O. It functions in the pathway secondary metabolite biosynthesis; terpenoid biosynthesis. Functionally, FAD-dependent monooxygenase; part of the gene cluster that mediates the biosynthesis of pyripyropene A, a specific human acyl-coenzyme A:cholesterol acyltransferase 2 inhibitor. The first step of the pathway is the synthesis of nicotinyl-CoA from nicotinic acid by the nicotinic acid-CoA ligase pyr1. Nicotinyl-CoA is then a substrate of polyketide synthase pyr2 to produce 4-hydroxy-6-(3-pyridinyl)-2H-pyran-2-one (HPPO) which is further prenylated by the polyprenyl transferase pyr6 to yield farnesyl-HPPO. The next steps consist of an epoxidation of farnesyl-HPPO to epoxyfarnesyl-HPPO by FAD-dependent monooxygenase pyr5 and a cyclization of the terpenoid portion by the terpene cyclase pyr4 to yield deacetyl-pyripyropene E. The 2 cytochrome P450 monooxygenases pyr3 and pyr9, and the 2 acetyltransferases pyr7 and pyr8 are involved in the conversion of deacetyl-pyripyropene E into pyripyropene A through several cycles of oxidation and acetylation steps. Pyr7 acetylates deacetyl-pyripyropene E to pyripyropene E which is oxidized to 11-deacetyl-pyripyropene O by pyr3, which is in turn acetylated into pyripyropene O by pyr8. Pyripyropene O is then oxidized to deacetyl-pyripyropene A by pyr9. Deacetyl-pyripyropene A is finally acetylated to pyripyropene A by pyr8. The sequence is that of FAD-dependent monooxygenase pyr5 from Aspergillus fumigatus (strain ATCC MYA-4609 / CBS 101355 / FGSC A1100 / Af293) (Neosartorya fumigata).